Here is a 602-residue protein sequence, read N- to C-terminus: Elongation factor 4 (602 aa).

In terms of domain architecture, tr-type G spans 6–188 (DHIRNFSIVA…AIVTQLPAPK (183 aa)). GTP is bound by residues 18–23 (DHGKST) and 135–138 (NKID).

This sequence belongs to the TRAFAC class translation factor GTPase superfamily. Classic translation factor GTPase family. LepA subfamily.

Its subcellular location is the cell inner membrane. The enzyme catalyses GTP + H2O = GDP + phosphate + H(+). Functionally, required for accurate and efficient protein synthesis under certain stress conditions. May act as a fidelity factor of the translation reaction, by catalyzing a one-codon backward translocation of tRNAs on improperly translocated ribosomes. Back-translocation proceeds from a post-translocation (POST) complex to a pre-translocation (PRE) complex, thus giving elongation factor G a second chance to translocate the tRNAs correctly. Binds to ribosomes in a GTP-dependent manner. In Brucella anthropi (strain ATCC 49188 / DSM 6882 / CCUG 24695 / JCM 21032 / LMG 3331 / NBRC 15819 / NCTC 12168 / Alc 37) (Ochrobactrum anthropi), this protein is Elongation factor 4.